A 75-amino-acid chain; its full sequence is U6-lycotoxin-Ls1a (75 aa).

The N-terminal stretch at Met-1 to Ala-21 is a signal peptide. Positions Glu-22–Arg-25 are excised as a propeptide.

This sequence belongs to the neurotoxin 19 (CSTX) family. 06 (U6-Lctx) subfamily. Post-translationally, contains 4 disulfide bonds. As to expression, expressed by the venom gland.

The protein localises to the secreted. This is U6-lycotoxin-Ls1a from Lycosa singoriensis (Wolf spider).